A 70-amino-acid chain; its full sequence is Small ribosomal subunit protein bS21 (70 aa).

The protein belongs to the bacterial ribosomal protein bS21 family.

The polypeptide is Small ribosomal subunit protein bS21 (Methylibium petroleiphilum (strain ATCC BAA-1232 / LMG 22953 / PM1)).